The following is a 517-amino-acid chain: Bifunctional purine biosynthesis protein PurH (517 aa).

An MGS-like domain is found at 1 to 146 (MAPIALLSVS…KNHAHVAVLT (146 aa)).

This sequence belongs to the PurH family.

The enzyme catalyses (6R)-10-formyltetrahydrofolate + 5-amino-1-(5-phospho-beta-D-ribosyl)imidazole-4-carboxamide = 5-formamido-1-(5-phospho-D-ribosyl)imidazole-4-carboxamide + (6S)-5,6,7,8-tetrahydrofolate. It carries out the reaction IMP + H2O = 5-formamido-1-(5-phospho-D-ribosyl)imidazole-4-carboxamide. It participates in purine metabolism; IMP biosynthesis via de novo pathway; 5-formamido-1-(5-phospho-D-ribosyl)imidazole-4-carboxamide from 5-amino-1-(5-phospho-D-ribosyl)imidazole-4-carboxamide (10-formyl THF route): step 1/1. It functions in the pathway purine metabolism; IMP biosynthesis via de novo pathway; IMP from 5-formamido-1-(5-phospho-D-ribosyl)imidazole-4-carboxamide: step 1/1. This Prochlorococcus marinus (strain MIT 9303) protein is Bifunctional purine biosynthesis protein PurH.